Reading from the N-terminus, the 236-residue chain is uncharacterized protein (236 aa).

The signal sequence occupies residues 1–22 (MEFKMQKIILGMLVVTASNAMA).

This is an uncharacterized protein from Pasteurella multocida (strain Pm70).